Consider the following 579-residue polypeptide: Arginine--tRNA ligase (579 aa).

The 'HIGH' region motif lies at 127–137 (PNLAKEMHVGH).

It belongs to the class-I aminoacyl-tRNA synthetase family. Monomer.

It localises to the cytoplasm. It carries out the reaction tRNA(Arg) + L-arginine + ATP = L-arginyl-tRNA(Arg) + AMP + diphosphate. The sequence is that of Arginine--tRNA ligase from Ectopseudomonas mendocina (strain ymp) (Pseudomonas mendocina).